A 72-amino-acid chain; its full sequence is 3-deoxy-manno-octulosonate cytidylyltransferase (72 aa).

The protein belongs to the KdsB family. In terms of assembly, homodimer.

It is found in the cytoplasm. The catalysed reaction is 3-deoxy-alpha-D-manno-oct-2-ulosonate + CTP = CMP-3-deoxy-beta-D-manno-octulosonate + diphosphate. It functions in the pathway nucleotide-sugar biosynthesis; CMP-3-deoxy-D-manno-octulosonate biosynthesis; CMP-3-deoxy-D-manno-octulosonate from 3-deoxy-D-manno-octulosonate and CTP: step 1/1. It participates in bacterial outer membrane biogenesis; lipopolysaccharide biosynthesis. Its function is as follows. Activates KDO (a required 8-carbon sugar) for incorporation into bacterial lipopolysaccharide in Gram-negative bacteria. This is 3-deoxy-manno-octulosonate cytidylyltransferase (kpsU) from Escherichia coli.